A 510-amino-acid chain; its full sequence is Indoleacetate--CoA ligase (510 aa).

This sequence belongs to the ATP-dependent AMP-binding enzyme family. Monomer.

It catalyses the reaction (indol-3-yl)acetate + ATP + CoA = (indol-3-yl)acetyl-CoA + AMP + diphosphate. It carries out the reaction (indol-3-yl)acetate + ATP + H(+) = (indol-3-yl)acetyl-AMP + diphosphate. The enzyme catalyses (indol-3-yl)acetyl-AMP + CoA = (indol-3-yl)acetyl-CoA + AMP + H(+). Its activity is regulated as follows. Inhibited by high concentrations of substrates, and by the synthetic auxin compound 2,4-dichlorophenoxyacetate (2,4-D), which does not serve as substrate. Its function is as follows. Involved in degradation of indoleacetate, the most common member of the auxin class of plant hormones. Highly specific indoleacetate-CoA ligase which catalyzes the ATP-dependent activation of indoleacetate (IAA) to indoleacetyl-CoA. Also activates some closely related compounds such as the non-physiological compound (2-naphthyl)acetate and phenylacetate, which seems to be a fortuitous substrate for IaaB. The chain is Indoleacetate--CoA ligase from Aromatoleum aromaticum (strain DSM 19018 / LMG 30748 / EbN1) (Azoarcus sp. (strain EbN1)).